Here is a 403-residue protein sequence, read N- to C-terminus: Tetratricopeptide repeat protein 19, mitochondrial (403 aa).

A mitochondrion-targeting transit peptide spans 1–67 (MALRSYCRQL…WHRRSWHRCA (67 aa)). TPR repeat units follow at residues 154–187 (IYTY…MLSG), 297–330 (LVLM…GQAA), and 336–369 (HVLL…AHTA).

The protein belongs to the TTC19 family. Binds to the mature mitochondrial complex III dimer, after the incorporation of the Rieske protein (UQCRFS1). Interacts with UQCRC1 and UQCRFS1. Interacts with ZFYVE26 and CHMP4B.

It localises to the mitochondrion inner membrane. Required for the preservation of the structural and functional integrity of mitochondrial respiratory complex III by allowing the physiological turnover of the Rieske protein UQCRFS1. Involved in the clearance of UQCRFS1 N-terminal fragments, which are produced upon incorporation into the complex III and whose presence is detrimental for its catalytic activity. The sequence is that of Tetratricopeptide repeat protein 19, mitochondrial (ttc19) from Danio rerio (Zebrafish).